Reading from the N-terminus, the 213-residue chain is Uridine kinase (213 aa).

15–22 (GASASGKS) is a binding site for ATP.

It belongs to the uridine kinase family.

It is found in the cytoplasm. The catalysed reaction is uridine + ATP = UMP + ADP + H(+). It catalyses the reaction cytidine + ATP = CMP + ADP + H(+). Its pathway is pyrimidine metabolism; CTP biosynthesis via salvage pathway; CTP from cytidine: step 1/3. It participates in pyrimidine metabolism; UMP biosynthesis via salvage pathway; UMP from uridine: step 1/1. This is Uridine kinase from Enterobacter sp. (strain 638).